A 612-amino-acid chain; its full sequence is Chaperone protein DnaK (612 aa).

The residue at position 174 (Thr-174) is a Phosphothreonine; by autocatalysis. Positions 579-612 are disordered; that stretch reads GSAGTGAGSQAGSAAGSGDGQSMDAEFKVKDEDK. The segment covering 581 to 597 has biased composition (gly residues); that stretch reads AGTGAGSQAGSAAGSGD. Residues 603 to 612 are compositionally biased toward basic and acidic residues; the sequence is AEFKVKDEDK.

Belongs to the heat shock protein 70 family.

Acts as a chaperone. This chain is Chaperone protein DnaK, found in Symbiobacterium thermophilum (strain DSM 24528 / JCM 14929 / IAM 14863 / T).